A 345-amino-acid polypeptide reads, in one-letter code: 4-hydroxy-3-methylbut-2-en-1-yl diphosphate synthase (flavodoxin) (345 aa).

Positions 271, 274, 306, and 313 each coordinate [4Fe-4S] cluster.

It belongs to the IspG family. [4Fe-4S] cluster serves as cofactor.

The enzyme catalyses (2E)-4-hydroxy-3-methylbut-2-enyl diphosphate + oxidized [flavodoxin] + H2O + 2 H(+) = 2-C-methyl-D-erythritol 2,4-cyclic diphosphate + reduced [flavodoxin]. It participates in isoprenoid biosynthesis; isopentenyl diphosphate biosynthesis via DXP pathway; isopentenyl diphosphate from 1-deoxy-D-xylulose 5-phosphate: step 5/6. Converts 2C-methyl-D-erythritol 2,4-cyclodiphosphate (ME-2,4cPP) into 1-hydroxy-2-methyl-2-(E)-butenyl 4-diphosphate. The polypeptide is 4-hydroxy-3-methylbut-2-en-1-yl diphosphate synthase (flavodoxin) (Haemophilus influenzae (strain PittEE)).